The following is a 359-amino-acid chain: Acyl-CoA desaturase 3 (359 aa).

Residues 1–34 are disordered; the sequence is MPGHLLQEEMTPSYTTTTTITAPPSGSLQNGREK. Residues 1 to 72 are Cytoplasmic-facing; the sequence is MPGHLLQEEM…EGPPPKLEYV (72 aa). Positions 11–27 are enriched in low complexity; the sequence is TPSYTTTTTITAPPSGS. A helical transmembrane segment spans residues 73 to 93; the sequence is WRNIILMALLHVGALYGITLV. Asparagine 75 provides a ligand contact to substrate. The Lumenal segment spans residues 94–97; it reads PSCK. Residues 98–118 form a helical membrane-spanning segment; that stretch reads LYTCLFAFVYYVISIEGIGAG. The Cytoplasmic portion of the chain corresponds to 119 to 217; that stretch reads VHRLWSHRTY…EKLVMFQRRY (99 aa). Fe cation contacts are provided by histidine 120 and histidine 125. A Histidine box-1 motif is present at residues 120–125; that stretch reads HRLWSH. 3 residues coordinate substrate: asparagine 148, arginine 155, and aspartate 156. Fe cation is bound by residues histidine 157, histidine 160, and histidine 161. Residues 157–161 carry the Histidine box-2 motif; sequence HRAHH. Substrate-binding residues include arginine 188 and lysine 189. Phosphoserine is present on serine 203. The helical transmembrane segment at 218–237 threads the bilayer; it reads YKPGILLMCFILPTLVPWYC. At 238 to 241 the chain is on the lumenal side; the sequence is WGET. Residues 242 to 263 form a helical membrane-spanning segment; that stretch reads FLNSFYVATLLRYAVVLNATWL. Tryptophan 262 lines the substrate pocket. Residues 264–359 lie on the Cytoplasmic side of the membrane; it reads VNSAAHLYGY…RTGDGSHKSG (96 aa). Histidine 269, histidine 298, histidine 301, and histidine 302 together coordinate Fe cation. Residues 298 to 302 carry the Histidine box-3 motif; sequence HNYHH.

The protein belongs to the fatty acid desaturase type 1 family. Fe(2+) serves as cofactor. Detected in skin, but at lower levels compared to Scd1. Detected in the middlle part of the sebaceous gland, but not in hair follicle. Not detected in liver and brain.

Its subcellular location is the endoplasmic reticulum membrane. The protein resides in the microsome membrane. The enzyme catalyses hexadecanoyl-CoA + 2 Fe(II)-[cytochrome b5] + O2 + 2 H(+) = (9Z)-hexadecenoyl-CoA + 2 Fe(III)-[cytochrome b5] + 2 H2O. Its function is as follows. Stearoyl-CoA desaturase that utilizes O(2) and electrons from reduced cytochrome b5 to introduce the first double bond into saturated fatty acyl-CoA substrates. Catalyzes the insertion of a cis double bond at the delta-9 position into fatty acyl-CoA substrates including palmitoyl-CoA. Has a strong preference for saturated fatty acids with chain lengths of 14 or 16 carbon atoms (C14:0 and C16:0), and has only very low activity with stearatate (C18:0). Required for the biosynthesis of membrane phospholipids, cholesterol esters and triglycerides. The sequence is that of Acyl-CoA desaturase 3 from Mus musculus (Mouse).